We begin with the raw amino-acid sequence, 314 residues long: Pseudouridine-5'-phosphate glycosidase (314 aa).

The Proton donor role is filled by glutamate 30. The substrate site is built by lysine 91 and valine 111. A Mn(2+)-binding site is contributed by aspartate 143. Serine 145 to aspartate 147 serves as a coordination point for substrate. Residue lysine 164 is the Nucleophile of the active site.

Belongs to the pseudouridine-5'-phosphate glycosidase family. Homotrimer. Mn(2+) is required as a cofactor.

It catalyses the reaction D-ribose 5-phosphate + uracil = psi-UMP + H2O. Catalyzes the reversible cleavage of pseudouridine 5'-phosphate (PsiMP) to ribose 5-phosphate and uracil. Functions biologically in the cleavage direction, as part of a pseudouridine degradation pathway. This chain is Pseudouridine-5'-phosphate glycosidase, found in Cupriavidus pinatubonensis (strain JMP 134 / LMG 1197) (Cupriavidus necator (strain JMP 134)).